The primary structure comprises 965 residues: Argonaute protein wago-4 (965 aa).

A disordered region spans residues 1 to 34 (MPALPPVYTPSGAPSSVHAPPAVPPVPVPTQPLR). Residues 10–20 (PSGAPSSVHAP) show a composition bias toward low complexity. The span at 21–30 (PAVPPVPVPT) shows a compositional bias: pro residues. A PAZ domain is found at 318-428 (PILDKLKEIT…YPMELLKISS (111 aa)). The Piwi domain maps to 594-924 (TFVFIITDDS…YAKRGRNLWN (331 aa)).

It belongs to the argonaute family. WAGO subfamily. As to quaternary structure, interacts with znfx-1; the interaction promotes the transmission of epigenetic information across generations. May interact with mina-1. As to expression, expressed in the hermaphrodite germline and in oocytes. Expressed at a low level in the male germline. Not expressed in the soma of hermaphrodites or males.

It is found in the cytoplasm. The protein localises to the perinuclear region. It localises to the cytoplasmic granule. Functionally, argonaute protein which is involved in the endogenous small interfering RNA (endo-siRNA) pathway and is required for RNA-mediated gene silencing (RNAi) in the germline. Interacts with secondary 22G-RNAs, which are RNA-dependent RNA polymerase-derived endo-siRNAs, typically 22 nucleotides in length with a 5'guanosine residue. Also interacts with the mRNA targets of 22G-RNAs. Associates with znfx-1 to mediate small RNA-directed transgenerational epigenetic inheritance of both germline- and soma-expressed genes. The protein is Argonaute protein wago-4 of Caenorhabditis elegans.